The following is a 240-amino-acid chain: 2-C-methyl-D-erythritol 4-phosphate cytidylyltransferase (240 aa).

It belongs to the IspD/TarI cytidylyltransferase family. IspD subfamily.

The catalysed reaction is 2-C-methyl-D-erythritol 4-phosphate + CTP + H(+) = 4-CDP-2-C-methyl-D-erythritol + diphosphate. Its pathway is isoprenoid biosynthesis; isopentenyl diphosphate biosynthesis via DXP pathway; isopentenyl diphosphate from 1-deoxy-D-xylulose 5-phosphate: step 2/6. In terms of biological role, catalyzes the formation of 4-diphosphocytidyl-2-C-methyl-D-erythritol from CTP and 2-C-methyl-D-erythritol 4-phosphate (MEP). The sequence is that of 2-C-methyl-D-erythritol 4-phosphate cytidylyltransferase from Chlorobium luteolum (strain DSM 273 / BCRC 81028 / 2530) (Pelodictyon luteolum).